Consider the following 510-residue polypeptide: Chromosomal replication initiator protein DnaA (510 aa).

The tract at residues 1 to 107 is domain I, interacts with DnaA modulators; the sequence is MTNDPGSGFA…VRIAPPPADD (107 aa). Residues 107–169 form a domain II region; that stretch reads DDDDSVAAAV…ADTSASAGGT (63 aa). The interval 119–168 is disordered; that stretch reads PGLEASPETSQEVSDEIDDFGENAPNSRQSWPTHFKKRSTDADTSASAGG. The domain III, AAA+ region stretch occupies residues 170–386; the sequence is SLNRRYTFDT…GALIRVTAFA (217 aa). Residues glycine 214, glycine 216, lysine 217, and threonine 218 each coordinate ATP. Positions 387–510 are domain IV, binds dsDNA; sequence SLNKTPIDKA…TTRIRQRSKR (124 aa).

This sequence belongs to the DnaA family. Oligomerizes as a right-handed, spiral filament on DNA at oriC.

It is found in the cytoplasm. Its function is as follows. Plays an essential role in the initiation and regulation of chromosomal replication. ATP-DnaA binds to the origin of replication (oriC) to initiate formation of the DNA replication initiation complex once per cell cycle. Binds the DnaA box (a 9 base pair repeat at the origin) and separates the double-stranded (ds)DNA. Forms a right-handed helical filament on oriC DNA; dsDNA binds to the exterior of the filament while single-stranded (ss)DNA is stabiized in the filament's interior. The ATP-DnaA-oriC complex binds and stabilizes one strand of the AT-rich DNA unwinding element (DUE), permitting loading of DNA polymerase. After initiation quickly degrades to an ADP-DnaA complex that is not apt for DNA replication. Binds acidic phospholipids. In Mycobacterium marinum (strain ATCC BAA-535 / M), this protein is Chromosomal replication initiator protein DnaA.